We begin with the raw amino-acid sequence, 302 residues long: Putative peptide permease protein BRA0407/BS1330_II0404 (302 aa).

A disordered region spans residues 1–22 (MRSSIHASRLRKMGQSIPASTG). Helical transmembrane passes span 38–58 (IFGL…PLWL), 101–121 (LLVA…IGAI), 147–167 (IFLL…VVVI), 200–222 (AGLG…VVYA), 230–250 (ILLE…AASW), and 268–288 (WQWL…NFIG). In terms of domain architecture, ABC transmembrane type-1 spans 97 to 288 (GRISLLVAVS…LAVLAINFIG (192 aa)).

This sequence belongs to the binding-protein-dependent transport system permease family. In terms of assembly, the complex is composed of two ATP-binding proteins (BRA0404 and BRA0405), two transmembrane proteins (BRA0407 and BRA0408) and a solute-binding protein (BRA0409).

It localises to the cell inner membrane. Probably part of an ABC transporter complex that could be involved in peptide import. Probably responsible for the translocation of the substrate across the membrane. The sequence is that of Putative peptide permease protein BRA0407/BS1330_II0404 from Brucella suis biovar 1 (strain 1330).